The following is a 410-amino-acid chain: Elongation factor Tu, chloroplastic (410 aa).

Positions 10–214 (KPHVNIGTIG…NVDEYIPTPE (205 aa)) constitute a tr-type G domain. The segment at 19–26 (GHVDHGKT) is G1. Position 19–26 (19–26 (GHVDHGKT)) interacts with GTP. Thr-26 serves as a coordination point for Mg(2+). The tract at residues 60–64 (GITIN) is G2. The tract at residues 81 to 84 (DCPG) is G3. Residues 81–85 (DCPGH) and 136–139 (NKED) each bind GTP. The G4 stretch occupies residues 136-139 (NKED). The G5 stretch occupies residues 174 to 176 (SAL).

It belongs to the TRAFAC class translation factor GTPase superfamily. Classic translation factor GTPase family. EF-Tu/EF-1A subfamily.

It is found in the plastid. The protein resides in the chloroplast stroma. The enzyme catalyses GTP + H2O = GDP + phosphate + H(+). GTP hydrolase that promotes the GTP-dependent binding of aminoacyl-tRNA to the A-site of ribosomes during protein biosynthesis. The sequence is that of Elongation factor Tu, chloroplastic (tufA) from Bigelowiella natans (Pedinomonas minutissima).